Here is a 576-residue protein sequence, read N- to C-terminus: MAGUK p55 subfamily member 7 (576 aa).

L27 domains lie at 10–64 (CDMG…EKQN) and 65–122 (PLPI…YDPV). Residues 139 to 220 (IIRLVKNSEP…AITFKIIPST (82 aa)) form the PDZ domain. The 71-residue stretch at 228-298 (EGKIFIKALF…PSKHFQERRL (71 aa)) folds into the SH3 domain. Positions 289–383 (PSKHFQERRL…VGPVGVGLNE (95 aa)) are phospho-regulated basic and hydrophobic (PRBH) motif. One can recognise a Guanylate kinase-like domain in the interval 368-560 (YRLIVLVGPV…AFNELKTTFD (193 aa)). Residue Ser409 is modified to Phosphoserine.

Belongs to the MAGUK family. In terms of assembly, heterodimer; able to heterodimerize via its C-terminal L27 domain with LIN7A, LIN7B and LIN7C. Forms a tripartite complex composed of DLG1, MPP7 and LIN7 (LIN7A or LIN7C). Interacts with DLG1 via its N-terminal L27 domain. Interacts with PALS1 and PATJ. Phosphorylated by aPKC which promotes dissociation from the cell cortex.

It localises to the membrane. Its subcellular location is the lateral cell membrane. It is found in the cell junction. The protein localises to the tight junction. The protein resides in the adherens junction. It localises to the cytoplasm. Its subcellular location is the cell cortex. In terms of biological role, acts as an important adapter that promotes epithelial cell polarity and tight junction formation via its interaction with DLG1. Involved in the assembly of protein complexes at sites of cell-cell contact. In Mus musculus (Mouse), this protein is MAGUK p55 subfamily member 7 (Mpp7).